The sequence spans 148 residues: Proteasome chaperone 4 (148 aa).

It belongs to the PSMG4 family. Component of the 20S proteasome chaperone. Forms a heterodimer with IRC25 that binds to proteasome precursors. Interacts with POP2.

It localises to the cytoplasm. Functionally, involved in 20S proteasome assembly, facilitating the alpha-ring formation. Involved in maintenance of telomere length. The sequence is that of Proteasome chaperone 4 (POC4) from Saccharomyces cerevisiae (strain ATCC 204508 / S288c) (Baker's yeast).